We begin with the raw amino-acid sequence, 195 residues long: CASP-like protein 2C2 (195 aa).

The Cytoplasmic portion of the chain corresponds to 1-18 (MAATTAAAAVPGVVRAER). Residues 19-39 (LLRGGCVVMAATAALLLGFSA) form a helical membrane-spanning segment. Residues 40-57 (ETKTVLFVRKTAVAKDVQ) are Extracellular-facing. Residues 58 to 78 (ALWVLTVAAAAAAGYQFAQLV) traverse the membrane as a helical segment. Residues 79–106 (RCMYCSSSGDAGAMAVAWTSFLLDKGCA) are Cytoplasmic-facing. The chain crosses the membrane as a helical span at residues 107-127 (YVVFASTAAALQACMVGLIGV). Over 128-145 (EALQWSKLCNIYTRFCEQ) the chain is Extracellular. A helical membrane pass occupies residues 146–166 (AAAGMLCSFLAAAGMAVLSAF). Topologically, residues 167 to 195 (SARRLFRLYSPAGHRRSCPRAAVLATSPH) are cytoplasmic.

The protein belongs to the Casparian strip membrane proteins (CASP) family. Homodimer and heterodimers.

The protein localises to the cell membrane. This Oryza sativa subsp. japonica (Rice) protein is CASP-like protein 2C2.